Consider the following 263-residue polypeptide: uncharacterized protein (263 aa).

Residues 72 to 168 (LDKKETKELS…RTIVEIRNTK (97 aa)) are a coiled coil. A disordered region spans residues 76–158 (ETKELSKKEK…EKKEKKEKED (83 aa)). The span at 83–95 (KEKKQLKKEKKAL) shows a compositional bias: basic residues. Positions 96 to 107 (KKENKGGKDKKD) are enriched in basic and acidic residues. The segment covering 108-121 (KKDKKDKKDKKDKK) has biased composition (basic residues). Basic and acidic residues-rich tracts occupy residues 122–131 (DKKDKGDKKD) and 139–158 (KHDD…EKED).

This is an uncharacterized protein from Dictyostelium discoideum (Social amoeba).